The chain runs to 180 residues: Thebaine synthase 1 (180 aa).

Ser96 serves as a coordination point for thebaine. Catalysis depends on His111, which acts as the Proton acceptor. Thr127 provides a ligand contact to thebaine.

This sequence belongs to the MLP family. In terms of assembly, homodimer (allosteric) and oligomers. In terms of tissue distribution, expressed in poppy latex.

The enzyme catalyses (7S)-O-acetylsalutaridinol = thebaine + acetate + H(+). Its pathway is alkaloid biosynthesis; morphine biosynthesis. Catalyzes the formation of thebaine from (7S)-salutaridinol 7-O-acetate at the expense of labile hydroxylated by-products, which are preferentially produced by spontaneous allylic elimination. This chain is Thebaine synthase 1, found in Papaver somniferum (Opium poppy).